Reading from the N-terminus, the 77-residue chain is Dermatoxin-DA1 (77 aa).

Positions 1–22 (MAFLKKSLFLVLFLGLVPLFLC) are cleaved as a signal peptide. Positions 23-42 (ENEKREGENEKEENDDQSEE) are excised as a propeptide. Residue K76 is modified to Lysine amide.

Belongs to the frog skin active peptide (FSAP) family. Dermatoxin subfamily. Expressed by the skin glands.

The protein localises to the secreted. Its function is as follows. Possesses a potent antimicrobial activity against Gram-positive and Gram-negative bacteria. Probably acts by disturbing membrane functions with its amphipathic structure. The chain is Dermatoxin-DA1 from Agalychnis dacnicolor (Giant Mexican leaf frog).